The primary structure comprises 473 residues: O-methyltransferase aclU (473 aa).

Residues Asp320 and 354 to 356 each bind S-adenosyl-L-methionine; that span reads GDF. His373 (proton acceptor) is an active-site residue.

This sequence belongs to the class I-like SAM-binding methyltransferase superfamily. Cation-independent O-methyltransferase family. COMT subfamily.

It functions in the pathway mycotoxin biosynthesis. In terms of biological role, O-methyltransferase; part of the gene cluster that mediates the biosynthesis of aspirochlorine (or antibiotic A30641), an unusual halogenated spiro compound with distinctive antifungal properties due to selective inhibition of protein biosynthesis, and which is also active against bacteria, viruses, and murine tumor cells. The non-ribosomal peptide synthetase (NRPS) aclP is responsible the formation of the diketopiperazine (DKP) core from the condensation of 2 phenylalanine residues. One Phe residue is tailored into chlorotyrosine by hydroxylation and chlorination, whereas the second Phe undergoes an unprecedented C-C bond cleavage to be converted into glycine. After formation of the DKP, sulfur is incorporated into the DKP by conjugation with glutathione by aclG, followed by its stepwise degradation to the thiol by aclI, aclJ and aclK, and the dithiol oxidation by aclT. In addition, oxygenases (aclB, aclC, aclL and aclO) and O-methyltransferases (aclM and aclU) act as tailoring enzymes to produce the intermediate dechloroaspirochlorine. Ultimately, chlorination of dechloroaspirochlorine by the halogenase aclH is the last step in the aspirochlorine pathway. The protein is O-methyltransferase aclU of Aspergillus oryzae (strain ATCC 42149 / RIB 40) (Yellow koji mold).